The following is a 413-amino-acid chain: BEN domain-containing protein 7 (413 aa).

Glycyl lysine isopeptide (Lys-Gly) (interchain with G-Cter in SUMO2) cross-links involve residues lysine 16, lysine 56, and lysine 85. The span at 78–88 (GKEGEKLKEEP) shows a compositional bias: basic and acidic residues. Disordered stretches follow at residues 78 to 153 (GKEG…GELP) and 208 to 243 (RTAV…MEKK). Polar residues-rich tracts occupy residues 99-111 (LNSS…SLHP) and 121-153 (PPQS…GELP). Residues 211–222 (VSRKRNKKKKVP) are compositionally biased toward basic residues. Low complexity predominate over residues 223 to 232 (PKTVEPLTVK). Lysine 243 is covalently cross-linked (Glycyl lysine isopeptide (Lys-Gly) (interchain with G-Cter in SUMO2)). Residues 287–392 (GFDVFMPKSQ…IKLARRRLKR (106 aa)) enclose the BEN domain. Threonine 324 is subject to Phosphothreonine. Serine 328 carries the post-translational modification Phosphoserine.

This is BEN domain-containing protein 7 (BEND7) from Homo sapiens (Human).